The primary structure comprises 238 residues: Uridylate kinase (238 aa).

12 to 15 lines the ATP pocket; it reads KLSG. The involved in allosteric activation by GTP stretch occupies residues 20–25; sequence GEKGFG. Residue glycine 54 coordinates UMP. 2 residues coordinate ATP: glycine 55 and arginine 59. UMP is bound by residues aspartate 74 and 135 to 142; that span reads TGSPYFST. Residues asparagine 163, tyrosine 169, and aspartate 172 each contribute to the ATP site.

This sequence belongs to the UMP kinase family. In terms of assembly, homohexamer.

Its subcellular location is the cytoplasm. It catalyses the reaction UMP + ATP = UDP + ADP. It functions in the pathway pyrimidine metabolism; CTP biosynthesis via de novo pathway; UDP from UMP (UMPK route): step 1/1. With respect to regulation, allosterically activated by GTP. Inhibited by UTP. Catalyzes the reversible phosphorylation of UMP to UDP. The polypeptide is Uridylate kinase (Lactococcus lactis subsp. lactis (strain IL1403) (Streptococcus lactis)).